An 83-amino-acid polypeptide reads, in one-letter code: Exodeoxyribonuclease 7 small subunit (83 aa).

The segment at 1–25 is disordered; sequence MQDELFETEKAPPKNAKNAPKKSFE.

Belongs to the XseB family. Heterooligomer composed of large and small subunits.

Its subcellular location is the cytoplasm. The catalysed reaction is Exonucleolytic cleavage in either 5'- to 3'- or 3'- to 5'-direction to yield nucleoside 5'-phosphates.. In terms of biological role, bidirectionally degrades single-stranded DNA into large acid-insoluble oligonucleotides, which are then degraded further into small acid-soluble oligonucleotides. This chain is Exodeoxyribonuclease 7 small subunit, found in Helicobacter pylori (strain P12).